Reading from the N-terminus, the 210-residue chain is 3-hexulose-6-phosphate synthase (210 aa).

Belongs to the HPS/KGPDC family. HPS subfamily.

It carries out the reaction D-ribulose 5-phosphate + formaldehyde = D-arabino-hex-3-ulose 6-phosphate. It functions in the pathway one-carbon metabolism; formaldehyde assimilation via RuMP pathway; D-fructose 6-phosphate from D-ribulose 5-phosphate and formaldehyde: step 1/2. Catalyzes the condensation of ribulose 5-phosphate with formaldehyde to form 3-hexulose 6-phosphate. The sequence is that of 3-hexulose-6-phosphate synthase from Staphylococcus epidermidis (strain ATCC 35984 / DSM 28319 / BCRC 17069 / CCUG 31568 / BM 3577 / RP62A).